Here is a 98-residue protein sequence, read N- to C-terminus: Small ribosomal subunit protein eS24 (98 aa).

Belongs to the eukaryotic ribosomal protein eS24 family.

The protein is Small ribosomal subunit protein eS24 of Thermococcus sibiricus (strain DSM 12597 / MM 739).